Here is a 944-residue protein sequence, read N- to C-terminus: ATP-dependent RNA helicase DDX42 (944 aa).

Over residues 1 to 18 (MNWNKGGPGTKRGFGFGG) the composition is skewed to gly residues. Disordered regions lie at residues 1–119 (MNWN…LEAF), 131–155 (MKRLEDKDKEKKNAKGIRDDIEEED), and 182–203 (EYDSDGNPIAPSKKIIDPLPPI). Over residues 35-52 (SHSAFGTAGSSAAFAKSG) the composition is skewed to low complexity. Positions 70-84 (DEENAYFEDEEEDNS) are enriched in acidic residues. Residues 120 to 157 (MAEVEDQAARDMKRLEDKDKEKKNAKGIRDDIEEEDDQ) are a coiled coil. Basic and acidic residues predominate over residues 131 to 149 (MKRLEDKDKEKKNAKGIRD). The short motif at 253–281 (SSFARFGFDEQLMHQIRKSEYTQPTPIQC) is the Q motif element. The Helicase ATP-binding domain maps to 284–459 (VPVAMSGRDM…RDILIDPIRV (176 aa)). ATP is bound at residue 297–304 (AKTGSGKT). Residues 407–410 (DEAD) carry the DEAD box motif. The region spanning 487 to 632 (WLTRRLVEFT…HVSKELLDLA (146 aa)) is the Helicase C-terminal domain. 3 disordered regions span residues 642 to 682 (RFKG…VMSN), 723 to 753 (GSSAAGASGWTSAGSLNSVPTSSAQQNAANP), and 794 to 944 (SANA…RWDS). Residues 723–737 (GSSAAGASGWTSAGS) show a composition bias toward low complexity. The segment covering 738–752 (LNSVPTSSAQQNAAN) has biased composition (polar residues). The span at 794-814 (SANASAGNREGVGSAGSAPRG) shows a compositional bias: low complexity. Residues 815–824 (GSSGGGGGGI) are compositionally biased toward gly residues. 2 stretches are compositionally biased toward basic and acidic residues: residues 825 to 887 (VRER…RHFT) and 901 to 926 (NISEGRSNESRNGENRKDANSRDNKT).

This sequence belongs to the DEAD box helicase family. DDX42 subfamily. Transient component of the SF3B subcomplex of the 17S U2 SnRNP complex.

It is found in the cytoplasm. The protein localises to the nucleus. It carries out the reaction ATP + H2O = ADP + phosphate + H(+). Its function is as follows. ATP-dependent RNA helicase that binds to partially double-stranded RNAs (dsRNAs) in order to unwind RNA secondary structures. Unwinding is promoted in the presence of single-strand binding proteins. Also mediates RNA duplex formation thereby displacing the single-strand RNA binding protein. ATP and ADP modulate its activity: ATP binding and hydrolysis by DDX42 triggers RNA strand separation, whereas the ADP-bound form of the protein triggers annealing of complementary RNA strands. Required for assembly of the 17S U2 SnRNP complex of the spliceosome, a large ribonucleoprotein complex that removes introns from transcribed pre-mRNAs: DDX42 associates transiently with the SF3B subcomplex of the 17S U2 SnRNP complex and is released after fulfilling its role in the assembly of 17S U2 SnRNP. The polypeptide is ATP-dependent RNA helicase DDX42 (DDX42) (Gallus gallus (Chicken)).